The following is a 226-amino-acid chain: PKHD-type hydroxylase PFL_0865 (226 aa).

One can recognise a Fe2OG dioxygenase domain in the interval 78 to 178 (KVFPPLINCY…RYASFFWTQS (101 aa)). Fe cation contacts are provided by H96, D98, and H159. R169 contributes to the 2-oxoglutarate binding site.

Requires Fe(2+) as cofactor. It depends on L-ascorbate as a cofactor.

The sequence is that of PKHD-type hydroxylase PFL_0865 from Pseudomonas fluorescens (strain ATCC BAA-477 / NRRL B-23932 / Pf-5).